The chain runs to 491 residues: Acetylcholine receptor subunit epsilon (491 aa).

Residues 1–20 (MAGALLCALLLLQLLGRGEG) form the signal peptide. Over 21 to 239 (KNEELRLYHY…VIYSLIIRRK (219 aa)) the chain is Extracellular. 2 N-linked (GlcNAc...) asparagine glycosylation sites follow: Asn-86 and Asn-161. A disulfide bridge connects residues Cys-148 and Cys-162. Residues 240-264 (PLFYVINIIVPCVLISGLVLLAYFL) traverse the membrane as a helical segment. The Cytoplasmic portion of the chain corresponds to 265–272 (PAQAGGQK). A helical membrane pass occupies residues 273–291 (CTVSINVLLAQTVFLFLIA). The Extracellular segment spans residues 292–306 (QKTPETSLSVPLLGR). The helical transmembrane segment at 307–328 (YLIFVMVVATLIVMNCVIVLNV) threads the bilayer. The Cytoplasmic segment spans residues 329–456 (SLRTPTTHAM…WVRMGKALDS (128 aa)). The helical transmembrane segment at 457–480 (ICFWAALVLFLVGSSLIFLGAYFN) threads the bilayer. Residues 481-491 (RVPQLPYPPCM) are Extracellular-facing.

Belongs to the ligand-gated ion channel (TC 1.A.9) family. Acetylcholine receptor (TC 1.A.9.1) subfamily. Epsilon/CHRNE sub-subfamily.

The protein resides in the postsynaptic cell membrane. It is found in the cell membrane. The enzyme catalyses K(+)(in) = K(+)(out). The catalysed reaction is Na(+)(in) = Na(+)(out). Functionally, after binding acetylcholine, the AChR responds by an extensive change in conformation that affects all subunits and leads to opening of an ion-conducting channel across the plasma membrane. The chain is Acetylcholine receptor subunit epsilon (CHRNE) from Bos taurus (Bovine).